We begin with the raw amino-acid sequence, 989 residues long: MLRFQRFASSYAQAQAVRKYPVGGIFHGYEVRRILPVPELRLTAVDLVHSQTGAEHLHIDRDDKNNVFSIAFKTNPPDSTGVPHILEHTTLCGSVKYPVRDPFFKMLNKSLANFMNAMTGPDYTFFPFSTTNPQDFANLRGVYLDSTLNPLLKQEDFDQEGWRLEHKNITDPESNIVFKGVVYNEMKGQISNANYYFWSKFQQSIYPSLNNSGGDPMKITDLRYGDLLDFHHKNYHPSNAKTFTYGNLPLVDTLKQLNEQFSGYGKRARKDKLLMPIDLKKDIDVKLLGQIDTMLPPEKQTKASMTWICGAPQDTYDTFLLKVLGNLLMDGHSSVMYQKLIESGIGLEFSVNSGVEPTTAVNLLTVGIQGVSDIEIFKDTVNNIFQNLLETEHPFDRKRIDAIIEQLELSKKDQKADFGLQLLYSILPGWTNKIDPFESLLFEDVLQRFRGDLETKGDTLFQDLIRKYIVHKPCFTFSIQGSEEFSKSLDDEEQTRLREKITALDEQDKKNIFKRGILLQEKQNEKEDLSCLPTLQIKDIPRAGDKYSIEQKNNTMSRITDTNGITYVRGKRLLNDIIPFELFPYLPLFAESLTNLGTTTESFSEIEDQIKLHTGGISTHVEVTSDPNTTEPRLIFGFDGWSLNSKTDHIFEFWSKILLETDFHKNSDKLKVLIRLLASSNTSSVADAGHAFARGYSAAHYRSSGAINETLNGIEQLQFINRLHSLLDNEETFQREVVDKLTELQKYIVDTNNMNFFITSDSDVQAKTVESQISKFMERLPHGSCLPNGPKTSDYPLIGSKCKHTLIKFPFQVHYTSQALLGVPYTHKDGSALQVMSNMLTFKHLHREVREKGGAYGGGASYSALAGIFSFYSYRDPQPLKSLETFKNSGRYILNDAKWGVTDLDEAKLTIFQQVDAPKSPKGEGVTYFMSGVTDDMKQARREQLLDVSLLDVHRVAEKYLLNKEGVSTVIGPGIEGKTVSPNWEVKEL.

A mitochondrion-targeting transit peptide spans 1 to 16; that stretch reads MLRFQRFASSYAQAQA. His-84 lines the Zn(2+) pocket. Glu-87 (proton acceptor) is an active-site residue. His-88 contacts Zn(2+). Residue Glu-160 is part of the active site. Glu-185 contributes to the Zn(2+) binding site. Ser-920 is modified (phosphoserine). 972-979 contacts ATP; that stretch reads GPGIEGKT.

Belongs to the peptidase M16 family. PreP subfamily. In terms of assembly, monomer and homodimer; homodimerization is induced by binding of the substrate. It depends on Zn(2+) as a cofactor.

The protein resides in the mitochondrion intermembrane space. The protein localises to the mitochondrion matrix. Activated by nucleotides, including ATP, GTP, CTP, UTP, and ADP. Activated by copper, manganese, calcium and magnesium ions; copper and manganese restore activity following inactivation by EDTA (ethylenediaminetetraacetic acid). Inhibited by metal chelators including EDTA, EGTA (ethylene glycol bis(2-aminoethyl)tetraacetic acid), and 1,10-phenanthroline. Inhibited by copper, zinc, and iron ions. Also inhibited by dithiothreitol p-mercuribenzenesulfonic acid, N-ethylmaleimide, protoporphyrin, hemin, protamine and triarginine. In terms of biological role, degrades mitochondrial transit peptides after their cleavage in the intermembrane space or in the matrix, and presequence peptides; clearance of these peptides is required to keep the presequence processing machinery running. Preferentially cleaves the N-terminal side of paired basic amino acid residues. Also degrades other unstructured peptides. May function as an ATP-dependent peptidase as opposed to a metalloendopeptidase. The chain is Presequence protease, mitochondrial from Saccharomyces cerevisiae (strain ATCC 204508 / S288c) (Baker's yeast).